Here is a 256-residue protein sequence, read N- to C-terminus: DNA repair protein RecO (256 aa).

Belongs to the RecO family.

Functionally, involved in DNA repair and RecF pathway recombination. In Bartonella henselae (strain ATCC 49882 / DSM 28221 / CCUG 30454 / Houston 1) (Rochalimaea henselae), this protein is DNA repair protein RecO.